The sequence spans 542 residues: Chaperonin GroEL 2 (542 aa).

Residues 30-33 (TLGP), Lys51, 87-91 (DGTTT), Gly415, and Asp496 each bind ATP.

This sequence belongs to the chaperonin (HSP60) family. As to quaternary structure, forms a cylinder of 14 subunits composed of two heptameric rings stacked back-to-back. Interacts with the co-chaperonin GroES.

The protein resides in the cytoplasm. It catalyses the reaction ATP + H2O + a folded polypeptide = ADP + phosphate + an unfolded polypeptide.. Functionally, together with its co-chaperonin GroES, plays an essential role in assisting protein folding. The GroEL-GroES system forms a nano-cage that allows encapsulation of the non-native substrate proteins and provides a physical environment optimized to promote and accelerate protein folding. The sequence is that of Chaperonin GroEL 2 from Azorhizobium caulinodans (strain ATCC 43989 / DSM 5975 / JCM 20966 / LMG 6465 / NBRC 14845 / NCIMB 13405 / ORS 571).